Reading from the N-terminus, the 347-residue chain is Dihydroorotate dehydrogenase (quinone) (347 aa).

FMN-binding positions include 65–69 (AGLDK) and T89. K69 serves as a coordination point for substrate. Substrate is bound at residue 114–118 (NRMGF). FMN contacts are provided by N146 and N179. N179 contributes to the substrate binding site. S182 serves as the catalytic Nucleophile. N184 provides a ligand contact to substrate. The FMN site is built by K224 and T252. Residue 253-254 (NT) coordinates substrate. Residues G275, G304, and 325-326 (YT) each bind FMN.

It belongs to the dihydroorotate dehydrogenase family. Type 2 subfamily. As to quaternary structure, monomer. Requires FMN as cofactor.

It localises to the cell membrane. It catalyses the reaction (S)-dihydroorotate + a quinone = orotate + a quinol. It participates in pyrimidine metabolism; UMP biosynthesis via de novo pathway; orotate from (S)-dihydroorotate (quinone route): step 1/1. Its function is as follows. Catalyzes the conversion of dihydroorotate to orotate with quinone as electron acceptor. This Herminiimonas arsenicoxydans protein is Dihydroorotate dehydrogenase (quinone).